Consider the following 121-residue polypeptide: Putative RNase MJ1216 (121 aa).

Active-site residues include Arg76 and His81. The RX(4)HXY motif motif lies at 76 to 83 (RDKLIHQY). Tyr83 carries the O-di-AMP-tyrosine modification.

Belongs to the HepT RNase toxin family. In terms of assembly, homodimer, probably forms a complex with antitoxin MJ1215 or MJ1217. Modified by antitoxin MJ1215 or MJ1217; probably at least 2 successive AMPylation events occur on Tyr-83.

Its function is as follows. Probable toxic component of a putative type VII toxin-antitoxin (TA) system, probably an RNase. Probably neutralized by antitoxin MJ1215 or MJ1217. Neutralization may be due to AMPylation by antitoxin. The polypeptide is Putative RNase MJ1216 (Methanocaldococcus jannaschii (strain ATCC 43067 / DSM 2661 / JAL-1 / JCM 10045 / NBRC 100440) (Methanococcus jannaschii)).